We begin with the raw amino-acid sequence, 225 residues long: MAKDMTLLWGSGSPPCWRVMIVLEEKNLQAYNSKLLSFEKGEHKSAEVMSMNPRGQLPSFKHGSKVLNESYAACMYLESQFKSQGNKLIPDCPAEQAMMYQRMFEGLTLAQKMADVIYYSWKVPEAERHDSAVKRNKENLSTELKLWEEYLQKTSGSFVAGKSFSLADVSVFPGVAYLFRFGLTEERYPQLTAYYNSLKERPSIKASWPPTWLESPQGQDMLKDV.

The 83-residue stretch at 3 to 85 (KDMTLLWGSG…YLESQFKSQG (83 aa)) folds into the GST N-terminal domain. Position 18 (R18) interacts with glutathione. Residues 92–217 (CPAEQAMMYQ…WPPTWLESPQ (126 aa)) enclose the GST C-terminal domain.

Belongs to the GST superfamily. Theta family. In terms of assembly, homodimer. As to expression, found in all the tissues examined. Highest values found in liver and in intestinal mucosa.

The protein resides in the cytoplasm. It catalyses the reaction RX + glutathione = an S-substituted glutathione + a halide anion + H(+). In terms of biological role, conjugation of reduced glutathione to a wide number of exogenous and endogenous hydrophobic electrophiles. The protein is Glutathione S-transferase A of Pleuronectes platessa (European plaice).